A 60-amino-acid chain; its full sequence is DNA-directed RNA polymerase subunit Rpo6 (60 aa).

Belongs to the archaeal Rpo6/eukaryotic RPB6 RNA polymerase subunit family. As to quaternary structure, part of the RNA polymerase complex.

It localises to the cytoplasm. It catalyses the reaction RNA(n) + a ribonucleoside 5'-triphosphate = RNA(n+1) + diphosphate. Its function is as follows. DNA-dependent RNA polymerase (RNAP) catalyzes the transcription of DNA into RNA using the four ribonucleoside triphosphates as substrates. The sequence is that of DNA-directed RNA polymerase subunit Rpo6 from Methanosarcina acetivorans (strain ATCC 35395 / DSM 2834 / JCM 12185 / C2A).